Here is a 452-residue protein sequence, read N- to C-terminus: Bifunctional protein GlmU (452 aa).

The pyrophosphorylase stretch occupies residues 1–225 (MDVVILAAGL…ENELIGINTR (225 aa)). Residues 6–9 (LAAG), K20, Q71, and 76–77 (GT) contribute to the UDP-N-acetyl-alpha-D-glucosamine site. Mg(2+) is bound at residue D99. 4 residues coordinate UDP-N-acetyl-alpha-D-glucosamine: G136, E151, N166, and N223. N223 provides a ligand contact to Mg(2+). The tract at residues 226–246 (AELSLAMRYLRDRIVKGWMEK) is linker. Residues 247-452 (GITFYDPALV…LGWAKKKRKQ (206 aa)) are N-acetyltransferase. UDP-N-acetyl-alpha-D-glucosamine is bound by residues R329 and K347. H359 (proton acceptor) is an active-site residue. Y362 and N373 together coordinate UDP-N-acetyl-alpha-D-glucosamine. Acetyl-CoA is bound by residues A376, 382–383 (NY), S401, A419, and R436.

In the N-terminal section; belongs to the N-acetylglucosamine-1-phosphate uridyltransferase family. It in the C-terminal section; belongs to the transferase hexapeptide repeat family. As to quaternary structure, homotrimer. Mg(2+) serves as cofactor.

It is found in the cytoplasm. It carries out the reaction alpha-D-glucosamine 1-phosphate + acetyl-CoA = N-acetyl-alpha-D-glucosamine 1-phosphate + CoA + H(+). The catalysed reaction is N-acetyl-alpha-D-glucosamine 1-phosphate + UTP + H(+) = UDP-N-acetyl-alpha-D-glucosamine + diphosphate. The protein operates within nucleotide-sugar biosynthesis; UDP-N-acetyl-alpha-D-glucosamine biosynthesis; N-acetyl-alpha-D-glucosamine 1-phosphate from alpha-D-glucosamine 6-phosphate (route II): step 2/2. It participates in nucleotide-sugar biosynthesis; UDP-N-acetyl-alpha-D-glucosamine biosynthesis; UDP-N-acetyl-alpha-D-glucosamine from N-acetyl-alpha-D-glucosamine 1-phosphate: step 1/1. It functions in the pathway bacterial outer membrane biogenesis; LPS lipid A biosynthesis. Its function is as follows. Catalyzes the last two sequential reactions in the de novo biosynthetic pathway for UDP-N-acetylglucosamine (UDP-GlcNAc). The C-terminal domain catalyzes the transfer of acetyl group from acetyl coenzyme A to glucosamine-1-phosphate (GlcN-1-P) to produce N-acetylglucosamine-1-phosphate (GlcNAc-1-P), which is converted into UDP-GlcNAc by the transfer of uridine 5-monophosphate (from uridine 5-triphosphate), a reaction catalyzed by the N-terminal domain. The protein is Bifunctional protein GlmU of Thermodesulfovibrio yellowstonii (strain ATCC 51303 / DSM 11347 / YP87).